Consider the following 218-residue polypeptide: N-(5'-phosphoribosyl)anthranilate isomerase (218 aa).

This sequence belongs to the TrpF family.

The enzyme catalyses N-(5-phospho-beta-D-ribosyl)anthranilate = 1-(2-carboxyphenylamino)-1-deoxy-D-ribulose 5-phosphate. Its pathway is amino-acid biosynthesis; L-tryptophan biosynthesis; L-tryptophan from chorismate: step 3/5. The sequence is that of N-(5'-phosphoribosyl)anthranilate isomerase from Rhodopseudomonas palustris (strain HaA2).